The following is a 144-amino-acid chain: Large ribosomal subunit protein uL16 (144 aa).

Belongs to the universal ribosomal protein uL16 family. Part of the 50S ribosomal subunit.

In terms of biological role, binds 23S rRNA and is also seen to make contacts with the A and possibly P site tRNAs. This Latilactobacillus sakei subsp. sakei (strain 23K) (Lactobacillus sakei subsp. sakei) protein is Large ribosomal subunit protein uL16.